A 359-amino-acid polypeptide reads, in one-letter code: 3-dehydroquinate synthase (359 aa).

Residues Asp71–Lys76, Gly105–Asp109, Thr129–Thr130, Lys142, Lys151, and Cys169–Thr172 contribute to the NAD(+) site. Residues Glu184, His247, and His264 each contribute to the Zn(2+) site.

Belongs to the sugar phosphate cyclases superfamily. Dehydroquinate synthase family. Co(2+) is required as a cofactor. It depends on Zn(2+) as a cofactor. Requires NAD(+) as cofactor.

The protein localises to the cytoplasm. The catalysed reaction is 7-phospho-2-dehydro-3-deoxy-D-arabino-heptonate = 3-dehydroquinate + phosphate. The protein operates within metabolic intermediate biosynthesis; chorismate biosynthesis; chorismate from D-erythrose 4-phosphate and phosphoenolpyruvate: step 2/7. Catalyzes the conversion of 3-deoxy-D-arabino-heptulosonate 7-phosphate (DAHP) to dehydroquinate (DHQ). The protein is 3-dehydroquinate synthase of Baumannia cicadellinicola subsp. Homalodisca coagulata.